The chain runs to 461 residues: Glyceraldehyde-3-phosphate dehydrogenase-like protein (461 aa).

Phosphothreonine is present on T421.

The protein belongs to the glyceraldehyde-3-phosphate dehydrogenase family.

The polypeptide is Glyceraldehyde-3-phosphate dehydrogenase-like protein (gap2) (Pseudomonas aeruginosa (strain UCBPP-PA14)).